Here is a 48-residue protein sequence, read N- to C-terminus: ATP synthase protein 8 (48 aa).

The helical transmembrane segment at 13–35 (LTYGFTFILTILFLTSYVFLPMI) threads the bilayer.

It belongs to the ATPase protein 8 family. In terms of assembly, F-type ATPases have 2 components, CF(1) - the catalytic core - and CF(0) - the membrane proton channel. In yeast, the dimeric form of ATP synthase consists of 18 polypeptides: alpha, beta, gamma, delta, epsilon, 4 (B), 5 (OSCP), 6 (A), 8, 9 (C), d, E (Tim11), f, g, h, i, j and k.

The protein resides in the mitochondrion membrane. In terms of biological role, mitochondrial membrane ATP synthase (F(1)F(0) ATP synthase or Complex V) produces ATP from ADP in the presence of a proton gradient across the membrane which is generated by electron transport complexes of the respiratory chain. F-type ATPases consist of two structural domains, F(1) - containing the extramembraneous catalytic core and F(0) - containing the membrane proton channel, linked together by a central stalk and a peripheral stalk. During catalysis, ATP synthesis in the catalytic domain of F(1) is coupled via a rotary mechanism of the central stalk subunits to proton translocation. Part of the complex F(0) domain. Minor subunit located with subunit a in the membrane. This is ATP synthase protein 8 (ATP8) from Eremothecium gossypii (strain ATCC 10895 / CBS 109.51 / FGSC 9923 / NRRL Y-1056) (Yeast).